The primary structure comprises 95 residues: Large ribosomal subunit protein uL23 (95 aa).

Belongs to the universal ribosomal protein uL23 family. Part of the 50S ribosomal subunit. Contacts protein L29, and trigger factor when it is bound to the ribosome.

One of the early assembly proteins it binds 23S rRNA. One of the proteins that surrounds the polypeptide exit tunnel on the outside of the ribosome. Forms the main docking site for trigger factor binding to the ribosome. The protein is Large ribosomal subunit protein uL23 of Desulforamulus reducens (strain ATCC BAA-1160 / DSM 100696 / MI-1) (Desulfotomaculum reducens).